The following is a 231-amino-acid chain: 2-C-methyl-D-erythritol 4-phosphate cytidylyltransferase (231 aa).

Belongs to the IspD/TarI cytidylyltransferase family. IspD subfamily.

The enzyme catalyses 2-C-methyl-D-erythritol 4-phosphate + CTP + H(+) = 4-CDP-2-C-methyl-D-erythritol + diphosphate. It participates in isoprenoid biosynthesis; isopentenyl diphosphate biosynthesis via DXP pathway; isopentenyl diphosphate from 1-deoxy-D-xylulose 5-phosphate: step 2/6. In terms of biological role, catalyzes the formation of 4-diphosphocytidyl-2-C-methyl-D-erythritol from CTP and 2-C-methyl-D-erythritol 4-phosphate (MEP). This is 2-C-methyl-D-erythritol 4-phosphate cytidylyltransferase from Shewanella pealeana (strain ATCC 700345 / ANG-SQ1).